Here is a 179-residue protein sequence, read N- to C-terminus: ATP synthase subunit b (179 aa).

A helical membrane pass occupies residues 27-47 (TAITFLVMLVVLGKFAWGPIV).

The protein belongs to the ATPase B chain family. F-type ATPases have 2 components, F(1) - the catalytic core - and F(0) - the membrane proton channel. F(1) has five subunits: alpha(3), beta(3), gamma(1), delta(1), epsilon(1). F(0) has three main subunits: a(1), b(2) and c(10-14). The alpha and beta chains form an alternating ring which encloses part of the gamma chain. F(1) is attached to F(0) by a central stalk formed by the gamma and epsilon chains, while a peripheral stalk is formed by the delta and b chains.

Its subcellular location is the cell inner membrane. F(1)F(0) ATP synthase produces ATP from ADP in the presence of a proton or sodium gradient. F-type ATPases consist of two structural domains, F(1) containing the extramembraneous catalytic core and F(0) containing the membrane proton channel, linked together by a central stalk and a peripheral stalk. During catalysis, ATP synthesis in the catalytic domain of F(1) is coupled via a rotary mechanism of the central stalk subunits to proton translocation. Functionally, component of the F(0) channel, it forms part of the peripheral stalk, linking F(1) to F(0). The chain is ATP synthase subunit b from Anaeromyxobacter sp. (strain K).